A 267-amino-acid chain; its full sequence is Glucosamine-6-phosphate deaminase (267 aa).

Asp76 acts as the Proton acceptor; for enolization step in catalysis. The active-site For ring-opening step is the Asp145. His147 functions as the Proton acceptor; for ring-opening step in the catalytic mechanism. The For ring-opening step role is filled by Glu152.

This sequence belongs to the glucosamine/galactosamine-6-phosphate isomerase family. As to quaternary structure, homohexamer.

The protein localises to the cytoplasm. The catalysed reaction is alpha-D-glucosamine 6-phosphate + H2O = beta-D-fructose 6-phosphate + NH4(+). Its pathway is nucleotide-sugar biosynthesis; UDP-N-acetyl-alpha-D-glucosamine biosynthesis; alpha-D-glucosamine 6-phosphate from D-fructose 6-phosphate: step 1/1. Its function is as follows. Catalyzes the reversible conversion of alpha-D-glucosamine 6-phosphate (GlcN-6P) into beta-D-fructose 6-phosphate (Fru-6P) and ammonium ion, a regulatory reaction step in de novo uridine diphosphate-N-acetyl-alpha-D-glucosamine (UDP-GlcNAc) biosynthesis via hexosamine pathway. The protein is Glucosamine-6-phosphate deaminase of Dictyostelium discoideum (Social amoeba).